The primary structure comprises 788 residues: Endonuclease MutS2 (788 aa).

Residue 334-341 (GPNTGGKT) coordinates ATP. Positions 713–788 (LDLRGQRYEE…GTGATIVYLQ (76 aa)) constitute a Smr domain.

Belongs to the DNA mismatch repair MutS family. MutS2 subfamily. Homodimer. Binds to stalled ribosomes, contacting rRNA.

Functionally, endonuclease that is involved in the suppression of homologous recombination and thus may have a key role in the control of bacterial genetic diversity. Acts as a ribosome collision sensor, splitting the ribosome into its 2 subunits. Detects stalled/collided 70S ribosomes which it binds and splits by an ATP-hydrolysis driven conformational change. Acts upstream of the ribosome quality control system (RQC), a ribosome-associated complex that mediates the extraction of incompletely synthesized nascent chains from stalled ribosomes and their subsequent degradation. Probably generates substrates for RQC. This is Endonuclease MutS2 from Lactobacillus johnsonii (strain CNCM I-12250 / La1 / NCC 533).